Here is a 232-residue protein sequence, read N- to C-terminus: Thiamine import ATP-binding protein ThiQ (232 aa).

Residues 2–230 (LKLTDITWLY…KASASALLGI (229 aa)) form the ABC transporter domain. Residue 32–39 (GPSGAGKS) coordinates ATP.

Belongs to the ABC transporter superfamily. Thiamine importer (TC 3.A.1.19.1) family. As to quaternary structure, the complex is composed of two ATP-binding proteins (ThiQ), two transmembrane proteins (ThiP) and a solute-binding protein (ThiB).

It is found in the cell inner membrane. It catalyses the reaction thiamine(out) + ATP + H2O = thiamine(in) + ADP + phosphate + H(+). Its function is as follows. Part of the ABC transporter complex ThiBPQ involved in thiamine import. Responsible for energy coupling to the transport system. The polypeptide is Thiamine import ATP-binding protein ThiQ (Escherichia coli O6:H1 (strain CFT073 / ATCC 700928 / UPEC)).